Here is a 540-residue protein sequence, read N- to C-terminus: Early growth response protein 1 (540 aa).

Disordered regions lie at residues 1 to 105 and 162 to 240; these read MAAA…AESF and VSMT…PAYP. Positions 64-75 are enriched in gly residues; it reads SSGGGGGGGGGS. A compositionally biased stretch (low complexity) spans 167–190; the sequence is PPATSSSASSPAASSSASQSPPLS. The segment covering 192–201 has biased composition (polar residues); that stretch reads AVQSNDSSPI. Residue Lys-304 forms a Glycyl lysine isopeptide (Lys-Gly) (interchain with G-Cter in SUMO2) linkage. Residues 317-337 form a disordered region; it reads PSRMRKYPNRPSKTPPHERPY. Residues 337-361 form a C2H2-type 1 zinc finger; sequence YACPVESCDRRFSRSDELTRHIRIH. A C2H2-type 2; degenerate zinc finger spans residues 366–388; the sequence is PQCRISMRNFSRSDHLTTHIRTH. The C2H2-type 3 zinc finger occupies 394–416; that stretch reads FACDICGRKFARSDERKRHTKIH. Positions 407-482 are disordered; that stretch reads DERKRHTKIH…SPGSSTYPSP (76 aa). Over residues 411 to 421 the composition is skewed to basic residues; it reads RHTKIHLRQKD. Residues 427–482 are compositionally biased toward low complexity; the sequence is SAASAATSSLPSYPSPVATSYPSPATTSYPSPATTSYPSPVPTSYSSPGSSTYPSP.

This sequence belongs to the EGR C2H2-type zinc-finger protein family. Interacts with SNAI1 and SP1 upon 12-O-tetradecanoylphorbol-13-acetate (TPA) induction.

The protein localises to the nucleus. It localises to the cytoplasm. Its function is as follows. Transcriptional regulator. Recognizes and binds to the DNA sequence 5'-GCG(T/G)GGGCG-3'(EGR-site) in the promoter region of target genes. Binds double-stranded target DNA, irrespective of the cytosine methylation status. Regulates the transcription of numerous target genes, and thereby plays an important role in regulating the response to growth factors, DNA damage, and ischemia. Plays a role in the regulation of cell survival, proliferation and cell death. Activates expression of p53/TP53 and TGFB1, and thereby helps prevent tumor formation. Required for normal progress through mitosis and normal proliferation of hepatocytes after partial hepatectomy. Mediates responses to ischemia and hypoxia; regulates the expression of proteins such as IL1B and CXCL2 that are involved in inflammatory processes and development of tissue damage after ischemia. Regulates biosynthesis of luteinizing hormone (LHB) in the pituitary. Regulates the amplitude of the expression rhythms of clock genes: BMAL1, PER2 and NR1D1 in the liver via the activation of PER1 (clock repressor) transcription. Regulates the rhythmic expression of core-clock gene BMAL1 in the suprachiasmatic nucleus (SCN). In Bos taurus (Bovine), this protein is Early growth response protein 1 (EGR1).